Reading from the N-terminus, the 417-residue chain is NADH-quinone oxidoreductase subunit D (417 aa).

This sequence belongs to the complex I 49 kDa subunit family. As to quaternary structure, NDH-1 is composed of 14 different subunits. Subunits NuoB, C, D, E, F, and G constitute the peripheral sector of the complex.

It is found in the cell inner membrane. The catalysed reaction is a quinone + NADH + 5 H(+)(in) = a quinol + NAD(+) + 4 H(+)(out). Its function is as follows. NDH-1 shuttles electrons from NADH, via FMN and iron-sulfur (Fe-S) centers, to quinones in the respiratory chain. The immediate electron acceptor for the enzyme in this species is believed to be ubiquinone. Couples the redox reaction to proton translocation (for every two electrons transferred, four hydrogen ions are translocated across the cytoplasmic membrane), and thus conserves the redox energy in a proton gradient. The protein is NADH-quinone oxidoreductase subunit D of Polynucleobacter necessarius subsp. necessarius (strain STIR1).